The chain runs to 163 residues: uncharacterized protein (163 aa).

Over 1–33 (MKTLDKITNYDLFDFADEFLKFVPVFRPNPTVT) the chain is Cytoplasmic. The helical transmembrane segment at 34-54 (CLFGNPLTNLLVNGTGAACFF) threads the bilayer. The Extracellular portion of the chain corresponds to 55 to 117 (EFCSLALIKV…SLGMALPDDD (63 aa)). Residues 118–138 (VLLSITFWFLCNSSFSILFVF) traverse the membrane as a helical segment. The Cytoplasmic segment spans residues 139–163 (ELRIFLRTVNNLLVVFLSVLKRNDL).

Its subcellular location is the membrane. This is an uncharacterized protein from Saccharomyces cerevisiae (strain ATCC 204508 / S288c) (Baker's yeast).